Reading from the N-terminus, the 395-residue chain is MNQPWRTHLQTKLQQLHEQGQYRNLHVTEQAEETWLIRDEKRMLNLASNNYLGLSGDERLKEAAIASTRKYGAGATASRLVVGNYSLYEEVERSICDWKGTEKALVVSSGYTANVGVISSLACRHDIVFSDKLNHASIVDGIILSGAEHKRYRHNDLNHLEALLKTASPEKRKLIVTDTVFSMDGDTAYLRELVQLKEKYGAIIIVDEAHASGIYGIGGAGLSHIEKDLAQKIDIHMGTFSKALGCYGAYLTGDAIYIEYLQNMMRSFIFTTALPPSTLGAVQKAIEIVQEDHKRRENLIANGEYFRSKLREAGFNIGNSSTHIVPIVVGSNENTLRFSKRLQEAGIAAIAIRPPTVPVHSSRIRFAVTSEHTIADLKWAIERITHIAKEEELFV.

Residue arginine 23 coordinates substrate. 110–111 (GY) serves as a coordination point for pyridoxal 5'-phosphate. Residue histidine 135 participates in substrate binding. Pyridoxal 5'-phosphate contacts are provided by residues serine 182, 207-210 (DEAH), and 239-242 (TFSK). Lysine 242 carries the N6-(pyridoxal phosphate)lysine modification. Threonine 356 provides a ligand contact to substrate.

Belongs to the class-II pyridoxal-phosphate-dependent aminotransferase family. BioF subfamily. In terms of assembly, homodimer. It depends on pyridoxal 5'-phosphate as a cofactor.

It carries out the reaction 6-carboxyhexanoyl-[ACP] + L-alanine + H(+) = (8S)-8-amino-7-oxononanoate + holo-[ACP] + CO2. It functions in the pathway cofactor biosynthesis; biotin biosynthesis. Functionally, catalyzes the decarboxylative condensation of pimeloyl-[acyl-carrier protein] and L-alanine to produce 8-amino-7-oxononanoate (AON), [acyl-carrier protein], and carbon dioxide. The chain is Putative 8-amino-7-oxononanoate synthase (bioF) from Bacillus cereus (strain ZK / E33L).